We begin with the raw amino-acid sequence, 881 residues long: Dynamin-like GTPase MGM1, mitochondrial (881 aa).

The N-terminal 59 residues, 1–59 (MNASPVRLLILRRQLATHPAILYSSPYIKSPLVHLHSRMSNVHRSAHANALSFVITRRS), are a transit peptide targeting the mitochondrion. The Mitochondrial matrix segment spans residues 60–72 (ISHFPKIISKIIR). A helical; Signal-anchor for type II membrane protein membrane pass occupies residues 73–92 (LPIYVGGGMAAAGSYIAYKM). At 93-881 (EEASSFTKDK…KSYKGVSKNL (789 aa)) the chain is on the mitochondrial intermembrane side. The tract at residues 145-183 (ATSLDDDESKRQGDPKDDDDEDDDDEDDENDSVDTTQDE) is disordered. A compositionally biased stretch (acidic residues) spans 160 to 176 (KDDDDEDDDDEDDENDS). A Dynamin-type G domain is found at 207-505 (HLTLPSIVVI…LEISMSNALE (299 aa)). A G1 motif region spans residues 217 to 224 (GSQSSGKS). Ser-220, Ser-221, Gly-222, Lys-223, Ser-224, Ser-225, and Gly-239 together coordinate GTP. Ser-224 lines the Mg(2+) pocket. The segment at 243-245 (VTR) is G2 motif. Residues Thr-244 and Asp-317 each coordinate Mg(2+). A G3 motif region spans residues 317–320 (DLPG). The segment at 385-388 (TKLD) is G4 motif. GTP is bound by residues Lys-386, Asp-388, and Thr-415. The interval 414-417 (ITKT) is G5 motif. The segment at 668–780 (STADQVENCI…KMLKNKCHST (113 aa)) is paddle region. A disulfide bridge links Cys-777 with Cys-786. Residues 780–872 (TIEKDRCPEV…KIDSILVFKK (93 aa)) enclose the GED domain.

Belongs to the TRAFAC class dynamin-like GTPase superfamily. Dynamin/Fzo/YdjA family. In terms of assembly, oligomeric complex consisting of membrane-bound and soluble forms of MGM1. Associates with FZO1 through interaction with the intermembrane space domain of UGO1 which binds FZO1 through its cytoplasmic domain. Cleavage of the transit peptide by mitochondrial processing protease (MPP) produces a long integral membrane form of MGM1 (l-MGM1). Further processing by the rhomboid protease PCP1 produces a short peripheral membrane form of MGM1 (s-MGM1). Both isoforms are required for full activity.

It is found in the mitochondrion inner membrane. It localises to the mitochondrion intermembrane space. It catalyses the reaction GTP + H2O = GDP + phosphate + H(+). Its function is as follows. Dynamin-related GTPase that is essential for normal mitochondrial morphology by mediating fusion of the mitochondrial inner membranes, regulating cristae morphology and maintaining respiratory chain function. Exists in two forms: the transmembrane, long form (Dynamin-like GTPase MGM1, long form; L-MGM1), which is tethered to the inner mitochondrial membrane, and the short soluble form (Dynamin-like GTPase MGM1, short form; S-MGM1), which results from proteolytic cleavage and localizes in the intermembrane space. Both forms (L-MGM1 and S-MGM1) cooperate to catalyze the fusion of the mitochondrial inner membrane. The equilibrium between L-MGM1 and S-MGM1 is essential: excess levels of S-MGM1, following loss of mitochondrial membrane potential, lead to an impaired equilibrium between L-MGM1 and S-MGM1, inhibiting mitochondrial fusion. Plays a role in the maintenance and remodeling of mitochondrial cristae, some invaginations of the mitochondrial inner membrane that provide an increase in the surface area. Probably acts by forming helical filaments at the inside of inner membrane tubes with the shape and dimensions of crista junctions. Functionally, constitutes the transmembrane long form (L-MGM1) that plays a central role in mitochondrial inner membrane fusion and cristae morphology. L-MGM1 and the soluble short form (S-MGM1) form higher-order helical assemblies that coordinate the fusion of mitochondrial inner membranes. Inner membrane-anchored L-MGM1 molecules initiate membrane remodeling by recruiting soluble S-MGM1 to rapidly polymerize into a flexible cylindrical scaffold encaging the mitochondrial inner membrane. Once at the membrane surface, the formation of S-MGM1 helices induce bilayer curvature. MGM1 dimerization through the paddle region, which inserts into cardiolipin-containing membrane, promotes GTP hydrolysis and the helical assembly of a flexible MGM1 lattice on the membrane, which drives membrane curvature and mitochondrial fusion. In terms of biological role, constitutes the soluble short form (S-MGM1) generated by cleavage by PCP1, which plays a central role in mitochondrial inner membrane fusion and cristae morphology. The transmembrane long form (L-MGM1) and the S-MGM1 form higher-order helical assemblies that coordinate the fusion of mitochondrial inner membranes. Inner membrane-anchored L-MGM1 molecules initiate membrane remodeling by recruiting soluble S-MGM1 to rapidly polymerize into a flexible cylindrical scaffold encaging the mitochondrial inner membrane. Once at the membrane surface, the formation of S-MGM1 helices induce bilayer curvature. MGM1 dimerization through the paddle region, which inserts into cardiolipin-containing membrane, promotes GTP hydrolysis and the helical assembly of a flexible MGM1 lattice on the membrane, which drives membrane curvature and mitochondrial fusion. Excess levels of S-MGM1 produced by cleavage by PCP1 following stress conditions that induce loss of mitochondrial membrane potential, lead to an impaired equilibrium between L-MGM1 and S-MGM1, thereby inhibiting mitochondrial fusion. The polypeptide is Dynamin-like GTPase MGM1, mitochondrial (Saccharomyces cerevisiae (strain ATCC 204508 / S288c) (Baker's yeast)).